A 350-amino-acid polypeptide reads, in one-letter code: Inhibin beta E chain (350 aa).

The N-terminal stretch at 1–19 (MRLPDVQLWLVLLWALVRA) is a signal peptide. Positions 20–236 (QGTGSVCPSC…EPGAGRARRR (217 aa)) are excised as a propeptide. N-linked (GlcNAc...) asparagine glycosylation is present at N198. 4 disulfides stabilise this stretch: C240-C248, C247-C315, C276-C347, and C280-C349.

This sequence belongs to the TGF-beta family. In terms of assembly, homodimeric or heterodimeric through association with alpha and beta subunits, linked by one or more disulfide bonds. Inhibins are heterodimers of one alpha and one beta subunit. Activins are homo- or heterodimers of beta subunits only.

It localises to the secreted. In terms of biological role, inhibins and activins inhibit and activate, respectively, the secretion of follitropin by the pituitary gland. Inhibins/activins are involved in regulating a number of diverse functions such as hypothalamic and pituitary hormone secretion, gonadal hormone secretion, germ cell development and maturation, erythroid differentiation, insulin secretion, nerve cell survival, embryonic axial development or bone growth, depending on their subunit composition. Inhibins appear to oppose the functions of activins. Activin E is a homodimer of INHBE secreted by the liver that plays a crucial role in regulating metabolic homeostasis particularly in lipid metabolism and energy homeostasis. Plays a central role in the regulation of adipose tissue lipolysis by preventing the influx of fatty acids from adipose tissue into the liver. Mechanistically, signals via ACVR1C to activate SMAD2/3 signaling, suppressing PPARG target genes in adipose tissue, thereby reducing liver lipid content and improving glycemic control. Induces beige adipocyte formation and thermogenesis in response to cold exposure. This Homo sapiens (Human) protein is Inhibin beta E chain (INHBE).